The sequence spans 77 residues: Sec-independent protein translocase protein TatA (77 aa).

A helical transmembrane segment spans residues 3-23; it reads VFGIGLPELIVILVVALLIFG. The segment at 56–77 is disordered; the sequence is TAALEEEQQAKAEAESPREISP. The span at 63-77 shows a compositional bias: basic and acidic residues; it reads QQAKAEAESPREISP.

Belongs to the TatA/E family. As to quaternary structure, forms a complex with TatC.

It is found in the cell inner membrane. Functionally, part of the twin-arginine translocation (Tat) system that transports large folded proteins containing a characteristic twin-arginine motif in their signal peptide across membranes. TatA could form the protein-conducting channel of the Tat system. This is Sec-independent protein translocase protein TatA from Thermosynechococcus vestitus (strain NIES-2133 / IAM M-273 / BP-1).